A 104-amino-acid chain; its full sequence is uncharacterized protein (104 aa).

This is an uncharacterized protein from Pasteurella multocida (strain Pm70).